A 413-amino-acid chain; its full sequence is Type II methyltransferase M.NaeI (413 aa).

The region spanning 4–317 is the SAM-dependent MTase C5-type domain; sequence LEVVEICAGA…KRIRAALNME (314 aa). Cys78 is a catalytic residue.

The protein belongs to the class I-like SAM-binding methyltransferase superfamily. C5-methyltransferase family.

It carries out the reaction a 2'-deoxycytidine in DNA + S-adenosyl-L-methionine = a 5-methyl-2'-deoxycytidine in DNA + S-adenosyl-L-homocysteine + H(+). Its function is as follows. A methylase that recognizes the double-stranded sequence 5'-GCCGGC-3', methylates C-? on both strands, and protects the DNA from cleavage by the NaeI endonuclease. The polypeptide is Type II methyltransferase M.NaeI (Lentzea aerocolonigenes (Lechevalieria aerocolonigenes)).